The following is a 506-amino-acid chain: Maturase K (506 aa).

Belongs to the intron maturase 2 family. MatK subfamily.

It is found in the plastid. Its subcellular location is the chloroplast. Its function is as follows. Usually encoded in the trnK tRNA gene intron. Probably assists in splicing its own and other chloroplast group II introns. This is Maturase K from Phyllodoce caerulea (Blue mountain heath).